The chain runs to 466 residues: MTLKASEGESGGSMHTALSDLYLEHLLQKRSRPEAVSHPLNTVTEDMYTNGSPAPGSPAQVKGQEVRKVRLIQFEKVTEEPMGITLKLNEKQSCTVARILHGGMIHRQGSLHVGDEILEINGTNVTNHSVDQLQKAMKETKGMISLKVIPNQQSRLPALQMFMRAQFDYDPKKDNLIPCKEAGLKFATGDIIQIINKDDSNWWQGRVEGSSKESAGLIPSPELQEWRVASMAQSAPSEAPSCSPFGKKKKYKDKYLAKHSSIFDQLDVVSYEEVVRLPAFKRKTLVLIGASGVGRSHIKNALLSQNPEKFVYPVPYTTRPPRKSEEDGKEYHFISTEEMTRNISANEFLEFGSYQGNMFGTKFETVHQIHKQNKIAILDIEPQTLKIVRTAELSPFIVFIAPTDQGTQTEALQQLQKDSEAIRSQYAHYFDLSLVNNGVDETLKKLQEAFDQACSSPQWVPVSWVY.

At Thr2 the chain carries N-acetylthreonine. 2 positions are modified to phosphoserine: Ser13 and Ser19. At Thr49 the chain carries Phosphothreonine. Phosphoserine is present on residues Ser52, Ser57, and Ser110. Residues 71–152 (LIQFEKVTEE…MISLKVIPNQ (82 aa)) enclose the PDZ domain. An SH3 domain is found at 158–228 (ALQMFMRAQF…PSPELQEWRV (71 aa)). Ser243 carries the post-translational modification Phosphoserine. The interval 268–466 (VVSYEEVVRL…PQWVPVSWVY (199 aa)) is interaction with PALS1. In terms of domain architecture, Guanylate kinase-like spans 282–451 (RKTLVLIGAS…TLKKLQEAFD (170 aa)).

This sequence belongs to the MAGUK family. As to quaternary structure, heterodimer with PALS1. Interacts with DLG5 and NF2. Interacts (via guanylate kinase-like domain) with WHRN (via third PDZ domain). In terms of processing, palmitoylated. As to expression, ubiquitous.

The protein resides in the cell membrane. It is found in the cell projection. Its subcellular location is the stereocilium. Essential regulator of neutrophil polarity. Regulates neutrophil polarization by regulating AKT1 phosphorylation through a mechanism that is independent of PIK3CG activity. This is 55 kDa erythrocyte membrane protein (MPP1) from Homo sapiens (Human).